Reading from the N-terminus, the 438-residue chain is Dolichyl-diphosphooligosaccharide--protein glycosyltransferase 48 kDa subunit (438 aa).

The signal sequence occupies residues 1-25 (MASLRLSVLLVSVSWLLLLVSGLRA). Residues 26 to 408 (GPRTLVLMEN…QYERFIPSAY (383 aa)) lie on the Lumenal side of the membrane. The helical transmembrane segment at 409–429 (PYYASAFSVMFGLFIFSIVFL) threads the bilayer. The Cytoplasmic segment spans residues 430–438 (HMKEKEKSD).

The protein belongs to the DDOST 48 kDa subunit family. In terms of assembly, component of the oligosaccharyltransferase (OST) complex.

It is found in the endoplasmic reticulum membrane. It participates in protein modification; protein glycosylation. Its function is as follows. Subunit of the oligosaccharyl transferase (OST) complex that catalyzes the initial transfer of a defined glycan (Glc(3)Man(9)GlcNAc(2) in eukaryotes) from the lipid carrier dolichol-pyrophosphate to an asparagine residue within an Asn-X-Ser/Thr consensus motif in nascent polypeptide chains, the first step in protein N-glycosylation. N-glycosylation occurs cotranslationally and the complex associates with the Sec61 complex at the channel-forming translocon complex that mediates protein translocation across the endoplasmic reticulum (ER). All subunits are required for a maximal enzyme activity. Required for the assembly of both SST3A- and SS3B-containing OST complexes. This Xenopus laevis (African clawed frog) protein is Dolichyl-diphosphooligosaccharide--protein glycosyltransferase 48 kDa subunit.